The primary structure comprises 757 residues: Polyribonucleotide nucleotidyltransferase (757 aa).

Mg(2+) contacts are provided by aspartate 531 and aspartate 537. Residues 597 to 656 (PRVTTIRVPVDKIGEVIGPKGKIINAITEETGAQISIEDDGTVFVGATDGPSAQAAIDRI) form the KH domain. The S1 motif domain occupies 668–737 (GERFLGTVVK…KRGKISLVLV (70 aa)).

The protein belongs to the polyribonucleotide nucleotidyltransferase family. Requires Mg(2+) as cofactor.

The protein resides in the cytoplasm. The enzyme catalyses RNA(n+1) + phosphate = RNA(n) + a ribonucleoside 5'-diphosphate. Functionally, involved in mRNA degradation. Catalyzes the phosphorolysis of single-stranded polyribonucleotides processively in the 3'- to 5'-direction. The sequence is that of Polyribonucleotide nucleotidyltransferase from Mycolicibacterium paratuberculosis (strain ATCC BAA-968 / K-10) (Mycobacterium paratuberculosis).